The sequence spans 155 residues: Small ribosomal subunit protein uS7cz/uS7cy (155 aa).

Component of the chloroplast small ribosomal subunit (SSU). Mature 70S chloroplast ribosomes of higher plants consist of a small (30S) and a large (50S) subunit. The 30S small subunit contains 1 molecule of ribosomal RNA (16S rRNA) and 24 different proteins. The 50S large subunit contains 3 rRNA molecules (23S, 5S and 4.5S rRNA) and 33 different proteins.

It localises to the plastid. The protein resides in the chloroplast. In terms of biological role, component of the chloroplast ribosome (chloro-ribosome), a dedicated translation machinery responsible for the synthesis of chloroplast genome-encoded proteins, including proteins of the transcription and translation machinery and components of the photosynthetic apparatus. This chain is Small ribosomal subunit protein uS7cz/uS7cy (rps7-A), found in Spinacia oleracea (Spinach).